We begin with the raw amino-acid sequence, 241 residues long: tRNA (guanine-N(1)-)-methyltransferase (241 aa).

S-adenosyl-L-methionine-binding positions include Gly108 and 127–132 (LGDYVL).

It belongs to the RNA methyltransferase TrmD family. Homodimer.

It is found in the cytoplasm. The enzyme catalyses guanosine(37) in tRNA + S-adenosyl-L-methionine = N(1)-methylguanosine(37) in tRNA + S-adenosyl-L-homocysteine + H(+). Its function is as follows. Specifically methylates guanosine-37 in various tRNAs. This chain is tRNA (guanine-N(1)-)-methyltransferase, found in Streptococcus suis (strain 98HAH33).